A 533-amino-acid polypeptide reads, in one-letter code: Calcium-dependent protein kinase 8 (533 aa).

The interval 1–21 is disordered; sequence MGNCCASPGSETGSKKGKPKI. Residue Gly-2 is the site of N-myristoyl glycine attachment. The region spanning 57 to 315 is the Protein kinase domain; it reads YDLGREVGRG…AAQVLEHSWI (259 aa). ATP contacts are provided by residues 63–71 and Lys-86; that span reads VGRGEFGIT. Asp-181 (proton acceptor) is an active-site residue. The residue at position 221 (Ser-221) is a Phosphoserine. Residues 321 to 351 are autoinhibitory domain; sequence APNVSLGETVKARLKQFSVMNKLKKRALRVI. EF-hand domains lie at 358-394, 395-430, 431-466, and 467-502; these read EEVA…GQQQ, IPDT…LKKM, ANDE…EVDT, and NSEE…GTDW. The Ca(2+) site is built by Asp-371, Thr-375, Lys-377, Glu-382, Asp-408, Asp-410, Asp-412, Thr-414, Glu-419, Asp-444, Asn-446, Ser-448, Tyr-450, Glu-455, Asp-480, Asp-482, Asp-484, and Arg-486. The residue at position 488 (Ser-488) is a Phosphoserine. Glu-491 contacts Ca(2+). At Ser-526 the chain carries Phosphoserine.

It belongs to the protein kinase superfamily. Ser/Thr protein kinase family. CDPK subfamily.

The protein localises to the cell membrane. It carries out the reaction L-seryl-[protein] + ATP = O-phospho-L-seryl-[protein] + ADP + H(+). It catalyses the reaction L-threonyl-[protein] + ATP = O-phospho-L-threonyl-[protein] + ADP + H(+). With respect to regulation, activated by calcium. Autophosphorylation may play an important role in the regulation of the kinase activity. In terms of biological role, may play a role in signal transduction pathways that involve calcium as a second messenger. This is Calcium-dependent protein kinase 8 (CPK8) from Arabidopsis thaliana (Mouse-ear cress).